The primary structure comprises 391 residues: 8-amino-7-oxononanoate synthase (391 aa).

Residue Arg24 participates in substrate binding. Gly112–Tyr113 serves as a coordination point for pyridoxal 5'-phosphate. Residue His137 coordinates substrate. 3 residues coordinate pyridoxal 5'-phosphate: Ser183, His211, and Thr240. Position 243 is an N6-(pyridoxal phosphate)lysine (Lys243). Thr357 contributes to the substrate binding site.

Belongs to the class-II pyridoxal-phosphate-dependent aminotransferase family. BioF subfamily. In terms of assembly, homodimer. Requires pyridoxal 5'-phosphate as cofactor.

The enzyme catalyses 6-carboxyhexanoyl-[ACP] + L-alanine + H(+) = (8S)-8-amino-7-oxononanoate + holo-[ACP] + CO2. The protein operates within cofactor biosynthesis; biotin biosynthesis. Catalyzes the decarboxylative condensation of pimeloyl-[acyl-carrier protein] and L-alanine to produce 8-amino-7-oxononanoate (AON), [acyl-carrier protein], and carbon dioxide. The protein is 8-amino-7-oxononanoate synthase of Alkalilimnicola ehrlichii (strain ATCC BAA-1101 / DSM 17681 / MLHE-1).